The primary structure comprises 380 residues: 12-oxophytodienoate reductase 1 (380 aa).

Residues 35 to 37 (PLT), alanine 68, and glutamine 110 each bind FMN. 182–185 (HGAH) provides a ligand contact to substrate. Tyrosine 187 acts as the Proton donor in catalysis. Position 234 (arginine 234) interacts with FMN. A substrate-binding site is contributed by arginine 275. FMN contacts are provided by residues glycine 305 and 326-327 (GR).

It belongs to the NADH:flavin oxidoreductase/NADH oxidase family. Requires FMN as cofactor.

It catalyses the reaction (1S,2S)-OPC-8 + NADP(+) = (9S,13S,15Z)-12-oxophyto-10,15-dienoate + NADPH + H(+). Its pathway is lipid metabolism; oxylipin biosynthesis. Its function is as follows. Probably involved in the biosynthesis or metabolism of oxylipin signaling molecules. In vitro, reduces cis(-)-12-oxophytodienoic acid (cis(-)-OPDA) and to cis(-)-OPC-8:0. The polypeptide is 12-oxophytodienoate reductase 1 (Oryza sativa subsp. japonica (Rice)).